We begin with the raw amino-acid sequence, 427 residues long: UPF0229 protein YeaH (427 aa).

The segment covering 79–90 has biased composition (basic and acidic residues); that stretch reads NDHFVQNDRIER. Residues 79 to 110 are disordered; it reads NDHFVQNDRIERPQGGGGGSGSGQGQASQDGE. Gly residues predominate over residues 92–102; the sequence is QGGGGGSGSGQ.

This sequence belongs to the UPF0229 family.

This is UPF0229 protein YeaH from Escherichia coli O127:H6 (strain E2348/69 / EPEC).